The sequence spans 115 residues: U3-lycotoxin-Ls1q (115 aa).

The first 20 residues, 1-20, serve as a signal peptide directing secretion; it reads MKFVLLFGVLLVTLFSYSSA. Residues 21–44 constitute a propeptide that is removed on maturation; sequence EMFDDFDQADEDELLSLIEKEEAR. 4 cysteine pairs are disulfide-bonded: C48-C63, C55-C72, C62-C87, and C74-C85.

It belongs to the neurotoxin 19 (CSTX) family. 01 subfamily. In terms of tissue distribution, expressed by the venom gland.

The protein localises to the secreted. The polypeptide is U3-lycotoxin-Ls1q (Lycosa singoriensis (Wolf spider)).